The sequence spans 133 residues: UPF0768 protein C977.18 (133 aa).

Belongs to the UPF0768 family.

This chain is UPF0768 protein C977.18, found in Schizosaccharomyces pombe (strain 972 / ATCC 24843) (Fission yeast).